The following is a 137-amino-acid chain: Large ribosomal subunit protein bL17 (137 aa).

This sequence belongs to the bacterial ribosomal protein bL17 family. As to quaternary structure, part of the 50S ribosomal subunit. Contacts protein L32.

This is Large ribosomal subunit protein bL17 from Rickettsia typhi (strain ATCC VR-144 / Wilmington).